The following is a 258-amino-acid chain: NH(3)-dependent NAD(+) synthetase (258 aa).

ATP is bound at residue 34–41 (GLSGGIDS). A Mg(2+)-binding site is contributed by Asp-40. Arg-116 contributes to the deamido-NAD(+) binding site. Thr-136 serves as a coordination point for ATP. Residue Glu-141 coordinates Mg(2+). The ATP site is built by Lys-165 and Ser-187.

Belongs to the NAD synthetase family. Homodimer.

It carries out the reaction deamido-NAD(+) + NH4(+) + ATP = AMP + diphosphate + NAD(+) + H(+). It participates in cofactor biosynthesis; NAD(+) biosynthesis; NAD(+) from deamido-NAD(+) (ammonia route): step 1/1. Catalyzes the ATP-dependent amidation of deamido-NAD to form NAD. Uses ammonia as a nitrogen source. The polypeptide is NH(3)-dependent NAD(+) synthetase (Fusobacterium nucleatum subsp. nucleatum (strain ATCC 25586 / DSM 15643 / BCRC 10681 / CIP 101130 / JCM 8532 / KCTC 2640 / LMG 13131 / VPI 4355)).